The primary structure comprises 586 residues: Eukaryotic translation initiation factor 3 subunit D (586 aa).

Residues 102-176 (SAKRTFGRGG…DKPQRTREPS (75 aa)) form a disordered region. Residues 162-174 (GWKDYDKPQRTRE) show a composition bias toward basic and acidic residues. The interval 301-315 (SLDLVTVNENAADAP) is RNA gate. The interval 567–586 (EEEEEVAAEEQEAAEEEAEE) is disordered.

Belongs to the eIF-3 subunit D family. Component of the eukaryotic translation initiation factor 3 (eIF-3) complex.

It localises to the cytoplasm. MRNA cap-binding component of the eukaryotic translation initiation factor 3 (eIF-3) complex, which is involved in protein synthesis of a specialized repertoire of mRNAs and, together with other initiation factors, stimulates binding of mRNA and methionyl-tRNAi to the 40S ribosome. The eIF-3 complex specifically targets and initiates translation of a subset of mRNAs involved in cell proliferation. In the eIF-3 complex, eif3d specifically recognizes and binds the 7-methylguanosine cap of a subset of mRNAs. This is Eukaryotic translation initiation factor 3 subunit D from Aspergillus niger (strain ATCC MYA-4892 / CBS 513.88 / FGSC A1513).